A 76-amino-acid polypeptide reads, in one-letter code: uncharacterized protein (76 aa).

The signal sequence occupies residues 1 to 20 (MKNAVLVFLLLSVFALSVNA).

In terms of tissue distribution, prismatic layer of shell (at protein level). Expressed primarily in the mantle with equal levels in the mantle edge and the mantle pallium.

Its subcellular location is the secreted. This is an uncharacterized protein from Margaritifera margaritifera (Freshwater pearl mussel).